A 371-amino-acid polypeptide reads, in one-letter code: Dual-specificity RNA methyltransferase RlmN (371 aa).

The Proton acceptor role is filled by Glu97. A Radical SAM core domain is found at 103-341 (DGDRATLCVS…VTVRTTRGDD (239 aa)). Cys110 and Cys346 form a disulfide bridge. Cys117, Cys121, and Cys124 together coordinate [4Fe-4S] cluster. S-adenosyl-L-methionine contacts are provided by residues 171–172 (GE), Ser203, 225–227 (SLH), and Asn303. The S-methylcysteine intermediate role is filled by Cys346.

Belongs to the radical SAM superfamily. RlmN family. Requires [4Fe-4S] cluster as cofactor.

Its subcellular location is the cytoplasm. It carries out the reaction adenosine(2503) in 23S rRNA + 2 reduced [2Fe-2S]-[ferredoxin] + 2 S-adenosyl-L-methionine = 2-methyladenosine(2503) in 23S rRNA + 5'-deoxyadenosine + L-methionine + 2 oxidized [2Fe-2S]-[ferredoxin] + S-adenosyl-L-homocysteine. It catalyses the reaction adenosine(37) in tRNA + 2 reduced [2Fe-2S]-[ferredoxin] + 2 S-adenosyl-L-methionine = 2-methyladenosine(37) in tRNA + 5'-deoxyadenosine + L-methionine + 2 oxidized [2Fe-2S]-[ferredoxin] + S-adenosyl-L-homocysteine. In terms of biological role, specifically methylates position 2 of adenine 2503 in 23S rRNA and position 2 of adenine 37 in tRNAs. m2A2503 modification seems to play a crucial role in the proofreading step occurring at the peptidyl transferase center and thus would serve to optimize ribosomal fidelity. In Marinomonas sp. (strain MWYL1), this protein is Dual-specificity RNA methyltransferase RlmN.